The chain runs to 97 residues: Vitelline membrane protein 15a-2 (97 aa).

Residues 1–19 (MNKIIAALVLFTAVIGALA) form the signal peptide. Residues 20-23 (DYPA) are required for binding to the gut receptor. The tract at residues 26–46 (PPPPKPYHAPPPPPYHAPPHH) is disordered. Positions 61–97 (KAPAAKCGANLLVGCAPSVAHVPCVPVHPHPPPPAHY) constitute a VM domain.

Belongs to the vitelline membrane protein family. Expressed in the anterior region of the follicle cells.

It localises to the secreted. Functionally, has an oostatic activity. Inhibits trypsin biosynthesis in the midgut epithelial cells which indirectly reduces the vitellogenin concentration in the hemolymph resulting in inhibition of oocyte development. The sequence is that of Vitelline membrane protein 15a-2 (15a-2) from Aedes aegypti (Yellowfever mosquito).